Here is a 52-residue protein sequence, read N- to C-terminus: Stable plasmid inheritance protein (52 aa).

A helical membrane pass occupies residues 6-26 (SSLVWCVLIVCLTLLIFTYLT).

This sequence belongs to the Hok/Gef family.

The protein localises to the cell inner membrane. Functionally, toxic component of a type I toxin-antitoxin (TA) system. Part of the plasmid maintenance system, encodes a toxic protein that collapses the transmembrane potential and arrests respiration. When the adjacent non-translated flmB (sok) gene is disrupted FlmA no longer functions in plasmid maintenance (i.e. FlmB probably encodes an antisense antitoxin RNA). Translation of FlmA may be coupled to the upstream flmC gene. The polypeptide is Stable plasmid inheritance protein (flmA) (Escherichia coli O157:H7).